A 1219-amino-acid chain; its full sequence is Myosin-5 (1219 aa).

Residues 1 to 12 are compositionally biased toward basic residues; the sequence is MAILKRGARKKV. Residues 1 to 20 form a disordered region; it reads MAILKRGARKKVHQEPAKRS. A Myosin motor domain is found at 36–715; sequence VGVSDLTLLS…TLFALEHMRD (680 aa). Residue 129–136 participates in ATP binding; sequence GESGAGKT. S357 is subject to Phosphoserine. Position 359 is a phosphotyrosine (Y359). The tract at residues 404–486 is actin-binding; sequence SIGILDIYGF…PGIFAAMNDS (83 aa). IQ domains are found at residues 719–739 and 740–765; these read HNMA…RIDA and ATKI…YGTK. The 191-residue stretch at 771-961 folds into the TH1 domain; it reads KERRSMSLLG…TISVRRGNPP (191 aa). Phosphoserine is present on S777. Polar residues predominate over residues 951–964; the sequence is STISVRRGNPPNSQ. Disordered stretches follow at residues 951 to 1106 and 1139 to 1167; these read STIS…SELP and TAYM…VLNS. Residues 974-984 are compositionally biased toward low complexity; the sequence is SISSGYHASSS. Phosphoserine is present on S992. Over residues 1030 to 1041 the composition is skewed to polar residues; the sequence is NPASTLTASQSN. Residues 1048–1063 show a composition bias toward low complexity; it reads TAATRATPAATPAAAA. A compositionally biased stretch (pro residues) spans 1072–1083; the sequence is IPPPPPPPPPSS. An SH3 domain is found at 1085–1147; it reads PKEPMFEAAY…PTAYMKPHSG (63 aa). S1205 carries the post-translational modification Phosphoserine.

Belongs to the TRAFAC class myosin-kinesin ATPase superfamily. Myosin family. Interacts (via myosin motor domain) with SHE4; this interaction is important for proper localization and may regulate the interaction of the motor domain with actin. Interacts (via SH3 domain) with VRP1; this interaction is required for localization to sites of polarized growth and may regulate the interaction of the tail domain with actin. Interacts (via SH3 domain) with PAN1; this interaction is important for late stages of endocytopsis. Interacts (via SH3 domain) with BBC1 and LAS17. Interacts (via C-terminal acidic tail) with ARC19 and ARC40; ARC19 and ARC40 are Arp2/3 complex subunits. Interacts with BZZ1, PKH1, PKH2, YPK1 and YPK2. Phosphorylation of the TEDS site (Ser-357) is required for the polarization of the actin cytoskeleton and for ligand-induced, but not for constitutive internalization of STE2. Phosphorylation probably activates the myosin-I ATPase activity. Ser-357 is phosphorylated by YPK2 in vitro.

It localises to the cytoplasm. It is found in the cytoskeleton. The protein resides in the actin patch. Its function is as follows. One of two redundant type-I myosins implicated in the organization of the actin cytoskeleton. Required for proper actin cytoskeleton polarization and for the internalization step in endocytosis. At the cell cortex, assembles in patch-like structures together with proteins from the actin-polymerizing machinery and promotes actin assembly. Functions redundantly with LAS17 as actin nucleation-promoting factor (NPF) for the Arp2/3 complex. Motor domain phosphorylation by PAK kinases CLA4 and STE20 promotes CDC42-regulated actin assembly. Functions together with the NPF PAN1 in late stages of endocytosis. Motor domain phosphorylation by PDK1 kinases PKH1 and PKH2, and by SGK kinases YPK1 and YPK2, promotes ligand-induced, but not constitutive endocytosis of the G protein-coupled receptor STE2. The protein is Myosin-5 (MYO5) of Saccharomyces cerevisiae (strain YJM789) (Baker's yeast).